Reading from the N-terminus, the 632-residue chain is Effector protein hopAD1 (632 aa).

The segment at 13–34 (TAVDSSLPTSATSQTISNTKSR) is disordered. A compositionally biased stretch (polar residues) spans 15–32 (VDSSLPTSATSQTISNTK).

It localises to the secreted. The polypeptide is Effector protein hopAD1 (hopAD1) (Pseudomonas syringae pv. tomato (strain ATCC BAA-871 / DC3000)).